A 397-amino-acid polypeptide reads, in one-letter code: Phosphoglycerate kinase (397 aa).

Residues 21–23 (DFN), Arg-37, 60–63 (HLGR), Arg-119, and Arg-152 contribute to the substrate site. ATP is bound by residues Lys-203, Gly-294, Glu-325, and 354–357 (GGDS).

Belongs to the phosphoglycerate kinase family. In terms of assembly, monomer.

The protein resides in the cytoplasm. The catalysed reaction is (2R)-3-phosphoglycerate + ATP = (2R)-3-phospho-glyceroyl phosphate + ADP. It functions in the pathway carbohydrate degradation; glycolysis; pyruvate from D-glyceraldehyde 3-phosphate: step 2/5. This chain is Phosphoglycerate kinase, found in Chlorobium phaeovibrioides (strain DSM 265 / 1930) (Prosthecochloris vibrioformis (strain DSM 265)).